The following is a 335-amino-acid chain: Phosphate acyltransferase (335 aa).

The protein belongs to the PlsX family. Homodimer. Probably interacts with PlsY.

The protein resides in the cytoplasm. The catalysed reaction is a fatty acyl-[ACP] + phosphate = an acyl phosphate + holo-[ACP]. Its pathway is lipid metabolism; phospholipid metabolism. Catalyzes the reversible formation of acyl-phosphate (acyl-PO(4)) from acyl-[acyl-carrier-protein] (acyl-ACP). This enzyme utilizes acyl-ACP as fatty acyl donor, but not acyl-CoA. This chain is Phosphate acyltransferase, found in Streptococcus equi subsp. zooepidemicus (strain MGCS10565).